We begin with the raw amino-acid sequence, 138 residues long: Transcription antitermination protein NusB (138 aa).

This sequence belongs to the NusB family.

Functionally, involved in transcription antitermination. Required for transcription of ribosomal RNA (rRNA) genes. Binds specifically to the boxA antiterminator sequence of the ribosomal RNA (rrn) operons. The chain is Transcription antitermination protein NusB from Coxiella burnetii (strain Dugway 5J108-111).